The following is a 247-amino-acid chain: Phycocyanobilin:ferredoxin oxidoreductase (247 aa).

This sequence belongs to the HY2 family.

The enzyme catalyses (2R,3Z)-phycocyanobilin + 4 oxidized [2Fe-2S]-[ferredoxin] = biliverdin IXalpha + 4 reduced [2Fe-2S]-[ferredoxin] + 4 H(+). Its function is as follows. Catalyzes the four-electron reduction of biliverdin IX-alpha (2-electron reduction at both the A and D rings); the reaction proceeds via an isolatable 2-electron intermediate, 181,182-dihydrobiliverdin. The sequence is that of Phycocyanobilin:ferredoxin oxidoreductase (pcyA) from Prochlorococcus marinus (strain SARG / CCMP1375 / SS120).